A 196-amino-acid chain; its full sequence is UDP-N-acetylglucosamine transferase subunit ALG13 (196 aa).

It belongs to the glycosyltransferase 28 family. Heterodimer with ALG14 to form a functional enzyme.

The protein resides in the endoplasmic reticulum. It carries out the reaction an N-acetyl-alpha-D-glucosaminyl-diphospho-di-trans,poly-cis-dolichol + UDP-N-acetyl-alpha-D-glucosamine = an N,N'-diacetylchitobiosyl-diphospho-di-trans,poly-cis-dolichol + UDP + H(+). In terms of biological role, involved in protein N-glycosylation. Essential for the second step of the dolichol-linked oligosaccharide pathway. This Yarrowia lipolytica (strain CLIB 122 / E 150) (Yeast) protein is UDP-N-acetylglucosamine transferase subunit ALG13 (ALG13).